Here is a 956-residue protein sequence, read N- to C-terminus: Glutamyl aminopeptidase (956 aa).

Residues 1-21 (MILEERSSWEGSKRYCIKTKH) lie on the Cytoplasmic side of the membrane. The chain crosses the membrane as a helical; Signal-anchor for type II membrane protein span at residues 22 to 42 (VAIICAVVVAVGLIVGLSVGL). Topologically, residues 43–956 (TRSCDSTEGM…IRNWFLDLNG (914 aa)) are extracellular. A disordered region spans residues 48-87 (STEGMTQGTTQGTTQAPSHLPPVTSPPEDQGVCPASEDES). The span at 49-62 (TEGMTQGTTQGTTQ) shows a compositional bias: low complexity. Residues asparagine 126 and asparagine 199 are each glycosylated (N-linked (GlcNAc...) asparagine). Glutamate 225 provides a ligand contact to substrate. N-linked (GlcNAc...) asparagine glycosylation occurs at asparagine 326. Residue 359–363 (GAMEN) coordinates substrate. Histidine 395 lines the Zn(2+) pocket. Residue glutamate 396 is the Proton acceptor of the active site. Zn(2+) contacts are provided by histidine 399 and glutamate 418. Residues asparagine 556, asparagine 569, asparagine 599, asparagine 643, asparagine 647, asparagine 679, asparagine 764, asparagine 797, asparagine 802, and asparagine 829 are each glycosylated (N-linked (GlcNAc...) asparagine). Residue arginine 888 coordinates substrate.

The protein belongs to the peptidase M1 family. Homodimer; disulfide-linked. It depends on Zn(2+) as a cofactor.

It localises to the cell membrane. It catalyses the reaction Release of N-terminal glutamate (and to a lesser extent aspartate) from a peptide.. With respect to regulation, substrate specificity is modulated by calcium which enhances the enzymatic activity for cleavage of acidic residues while reducing its activity with basic residues. Inhibited by aminopeptidase inhibitors amastatin and bestatin. In terms of biological role, regulates central hypertension through its calcium-modulated preference to cleave N-terminal acidic residues from peptides such as angiotensin II. The chain is Glutamyl aminopeptidase (ENPEP) from Bos taurus (Bovine).